The sequence spans 252 residues: Zinc finger CCCH domain-containing protein 28 (252 aa).

Residues methionine 1–proline 21 are compositionally biased toward basic and acidic residues. The disordered stretch occupies residues methionine 1–aspartate 31. 2 consecutive C3H1-type zinc fingers follow at residues phenylalanine 71–glutamate 99 and asparagine 143–serine 171.

The sequence is that of Zinc finger CCCH domain-containing protein 28 from Arabidopsis thaliana (Mouse-ear cress).